Reading from the N-terminus, the 476-residue chain is MAPAGVSLRATILCLVAWAGLAAGDRVYIHPFHLVIHNESTCEQLAKANAGKPKDPTFIPAPIQAKTSPVDEKALQDQLVLVAAKLDTEDKLRAAMVGMLANFLGFRIYGMHSELWGVVHGATVLSPTAIFGTLASLYLGALDHTADRLQAILGVPWKDKNCTSRLDAHKVLSALQAVQGLLVAQGRADSQAQLLLSTVVGVFTAPGLHLKQPFVQGLALYTPVVLPRSLDFTELDVAAEKIDRFMQAVTGWKTGCSLMGASVDSTLAFNTYVHFQGKMKGFSLLAEPQEFWVDNSTSVSVPMLSGMGTFQHWSDVQDNFSVTQVPFTESACLLLIQPHYASDLDKVEGLTFQQNSLNWMKKLSPRAIHLTMPQLVLQGSYDLQDLLAQAELPAILHTELNLQKLSNDRIRVGEVLNSIFFELEADEREPTESTQQLNKPEVLEVTLNRPFLFAVYDQSATALHFLGRVANPLSTA.

Residues 1 to 24 form the signal peptide; that stretch reads MAPAGVSLRATILCLVAWAGLAAG. N-linked (GlcNAc...) asparagine glycosylation is found at asparagine 38, asparagine 161, asparagine 295, and asparagine 319. Cysteine 42 and cysteine 162 are disulfide-bonded.

Belongs to the serpin family. In terms of processing, in response to low blood pressure, the enzyme renin/REN cleaves angiotensinogen to produce angiotensin-1. Angiotensin-1 is a substrate of ACE (angiotensin converting enzyme) that removes a dipeptide to yield the physiologically active peptide angiotensin-2. Angiotensin-1 and angiotensin-2 can be further processed to generate angiotensin-3, angiotensin-4. Angiotensin 1-9 is cleaved from angiotensin-1 by ACE2 and can be further processed by ACE to produce angiotensin 1-7, angiotensin 1-5 and angiotensin 1-4. Angiotensin 1-7 has also been proposed to be cleaved from angiotensin-2 by ACE2 or from angiotensin-1 by MME (neprilysin). The disulfide bond is labile. Angiotensinogen is present in the circulation in a near 40:60 ratio with the oxidized disulfide-bonded form, which preferentially interacts with receptor-bound renin.

Its subcellular location is the secreted. Its function is as follows. Essential component of the renin-angiotensin system (RAS), a potent regulator of blood pressure, body fluid and electrolyte homeostasis. Acts directly on vascular smooth muscle as a potent vasoconstrictor, affects cardiac contractility and heart rate through its action on the sympathetic nervous system, and alters renal sodium and water absorption through its ability to stimulate the zona glomerulosa cells of the adrenal cortex to synthesize and secrete aldosterone. Acts by binding to angiotensin receptors AGTR1 and AGTR2. Also binds the DEAR/FBXW7-AS1 receptor. Functionally, stimulates aldosterone release. In terms of biological role, is a ligand for the G-protein coupled receptor MAS1. Has vasodilator and antidiuretic effects. Has an antithrombotic effect that involves MAS1-mediated release of nitric oxide from platelets. The chain is Angiotensinogen (AGT) from Pan troglodytes (Chimpanzee).